Here is a 379-residue protein sequence, read N- to C-terminus: Queuine tRNA-ribosyltransferase (379 aa).

D94 acts as the Proton acceptor in catalysis. Residues 94-98 (DSGGF), D148, Q191, and G218 contribute to the substrate site. The interval 249 to 255 (GVGSPDS) is RNA binding. Catalysis depends on D268, which acts as the Nucleophile. The RNA binding; important for wobble base 34 recognition stretch occupies residues 273-277 (TRIAR). C306, C308, C311, and H337 together coordinate Zn(2+).

This sequence belongs to the queuine tRNA-ribosyltransferase family. In terms of assembly, homodimer. Within each dimer, one monomer is responsible for RNA recognition and catalysis, while the other monomer binds to the replacement base PreQ1. Requires Zn(2+) as cofactor.

It catalyses the reaction 7-aminomethyl-7-carbaguanine + guanosine(34) in tRNA = 7-aminomethyl-7-carbaguanosine(34) in tRNA + guanine. It functions in the pathway tRNA modification; tRNA-queuosine biosynthesis. Catalyzes the base-exchange of a guanine (G) residue with the queuine precursor 7-aminomethyl-7-deazaguanine (PreQ1) at position 34 (anticodon wobble position) in tRNAs with GU(N) anticodons (tRNA-Asp, -Asn, -His and -Tyr). Catalysis occurs through a double-displacement mechanism. The nucleophile active site attacks the C1' of nucleotide 34 to detach the guanine base from the RNA, forming a covalent enzyme-RNA intermediate. The proton acceptor active site deprotonates the incoming PreQ1, allowing a nucleophilic attack on the C1' of the ribose to form the product. After dissociation, two additional enzymatic reactions on the tRNA convert PreQ1 to queuine (Q), resulting in the hypermodified nucleoside queuosine (7-(((4,5-cis-dihydroxy-2-cyclopenten-1-yl)amino)methyl)-7-deazaguanosine). This chain is Queuine tRNA-ribosyltransferase, found in Bacillus cereus (strain Q1).